Reading from the N-terminus, the 102-residue chain is Small ribosomal subunit protein uS10 (102 aa).

The protein belongs to the universal ribosomal protein uS10 family. In terms of assembly, part of the 30S ribosomal subunit.

Its function is as follows. Involved in the binding of tRNA to the ribosomes. The sequence is that of Small ribosomal subunit protein uS10 from Acidiphilium cryptum (strain JF-5).